Here is a 214-residue protein sequence, read N- to C-terminus: UPF0502 protein Pput_3252 (214 aa).

The protein belongs to the UPF0502 family.

This Pseudomonas putida (strain ATCC 700007 / DSM 6899 / JCM 31910 / BCRC 17059 / LMG 24140 / F1) protein is UPF0502 protein Pput_3252.